Here is a 560-residue protein sequence, read N- to C-terminus: uncharacterized protein (560 aa).

A run of 5 helical transmembrane segments spans residues Leu9–Leu29, Ile61–Ile81, Ile136–Met156, Ser305–Ile325, and Val442–Tyr462.

The protein localises to the membrane. This is an uncharacterized protein from Saccharomyces cerevisiae (strain ATCC 204508 / S288c) (Baker's yeast).